The chain runs to 154 residues: Small ribosomal subunit protein uS9 (154 aa).

Residues 133–154 (RAKESKKYGLKKARKAPQYSKR) form a disordered region. Positions 140 to 154 (YGLKKARKAPQYSKR) are enriched in basic residues.

The protein belongs to the universal ribosomal protein uS9 family.

In Salinispora tropica (strain ATCC BAA-916 / DSM 44818 / JCM 13857 / NBRC 105044 / CNB-440), this protein is Small ribosomal subunit protein uS9.